The primary structure comprises 502 residues: Probable cytosol aminopeptidase (502 aa).

Residues Lys258 and Asp263 each contribute to the Mn(2+) site. Residue Lys270 is part of the active site. Mn(2+)-binding residues include Asp281, Asp340, and Glu342. Arg344 is a catalytic residue.

The protein belongs to the peptidase M17 family. It depends on Mn(2+) as a cofactor.

It localises to the cytoplasm. It carries out the reaction Release of an N-terminal amino acid, Xaa-|-Yaa-, in which Xaa is preferably Leu, but may be other amino acids including Pro although not Arg or Lys, and Yaa may be Pro. Amino acid amides and methyl esters are also readily hydrolyzed, but rates on arylamides are exceedingly low.. The enzyme catalyses Release of an N-terminal amino acid, preferentially leucine, but not glutamic or aspartic acids.. Functionally, presumably involved in the processing and regular turnover of intracellular proteins. Catalyzes the removal of unsubstituted N-terminal amino acids from various peptides. This Clavibacter michiganensis subsp. michiganensis (strain NCPPB 382) protein is Probable cytosol aminopeptidase.